The primary structure comprises 236 residues: C-&gt;U-editing enzyme APOBEC-1 (236 aa).

Residues 10-134 (GDPTLRRRIE…QQNRQGLRDL (125 aa)) form the CMP/dCMP-type deaminase domain. Residue His61 coordinates Zn(2+). The active-site Proton donor is the Glu63. Zn(2+) contacts are provided by Cys93 and Cys96.

Belongs to the cytidine and deoxycytidylate deaminase family. As to quaternary structure, homodimer. Interacts with A1CF; form an mRNA editing complex. Interacts with RBM47; form an mRNA editing complex. Found in a complex with CELF2/CUGBP2 and A1CF. Interacts with HNRPAB. Interacts with SYNCRIP. Requires Zn(2+) as cofactor. Expressed exclusively in the small intestine.

It localises to the cytoplasm. It is found in the nucleus. The catalysed reaction is a cytidine in mRNA + H2O + H(+) = a uridine in mRNA + NH4(+). It carries out the reaction cytidine(6666) in apoB mRNA + H2O + H(+) = uridine(6666) in apoB mRNA + NH4(+). Functionally, cytidine deaminase catalyzing the cytidine to uridine postranscriptional editing of a variety of mRNAs. Form complexes with cofactors that confer differential editing activity and selectivity. Responsible for the postranscriptional editing of a CAA codon for Gln to a UAA codon for stop in the apolipoprotein B mRNA. Also involved in CGA (Arg) to UGA (Stop) editing in the NF1 mRNA. May also play a role in the epigenetic regulation of gene expression by participating in DNA demethylation. This chain is C-&gt;U-editing enzyme APOBEC-1, found in Homo sapiens (Human).